Here is a 704-residue protein sequence, read N- to C-terminus: SH3KBP1-binding protein 1 (704 aa).

The residue at position 2 (Ala-2) is an N-acetylalanine. The 70-residue stretch at 19 to 88 (EVIHLNVGGK…LRTKELDPRG (70 aa)) folds into the BTB domain. The disordered stretch occupies residues 146–165 (VGPQQIGGRPAPVRRSNTMP). The residue at position 163 (Thr-163) is a Phosphothreonine. WD repeat units lie at residues 233–280 (RLDW…GGSE), 283–322 (VFHL…WQVQ), 324–359 (VQPI…LRMK), 428–466 (VHRS…GMIS), and 548–586 (LECE…DGLG). Residues 609–704 (PLASSRGSFP…LKKTLNETSF (96 aa)) are disordered. Residues 612–631 (SSRGSFPSPSPRTSLTSLHS) are compositionally biased toward low complexity. A PXXXPR motif is present at residues 618-623 (PSPSPR). Residues Ser-644 and Ser-646 each carry the phosphoserine modification. Residues 678–683 (PTPAPR) carry the PXXXPR motif. The residue at position 693 (Thr-693) is a Phosphothreonine.

It belongs to the KCTD3 family. Monomer. Interacts with CUL3; interaction is direct and forms a 5:5 heterodecamer. Interacts (via PXXXPR motifs) with SH3KBP1 (via SH3 domains). Directly interacts with cathepsin B/CTSB.

The protein localises to the lysosome. Its function is as follows. Inhibits CBL-SH3KBP1 complex mediated down-regulation of EGFR signaling by sequestration of SH3KBP1. Binds to SH3KBP1 and prevents its interaction with CBL and inhibits translocation of SH3KBP1 to EGFR containing vesicles upon EGF stimulation. The protein is SH3KBP1-binding protein 1 (Shkbp1) of Mus musculus (Mouse).